The primary structure comprises 456 residues: Exodeoxyribonuclease 7 large subunit (456 aa).

This sequence belongs to the XseA family. As to quaternary structure, heterooligomer composed of large and small subunits.

It localises to the cytoplasm. The enzyme catalyses Exonucleolytic cleavage in either 5'- to 3'- or 3'- to 5'-direction to yield nucleoside 5'-phosphates.. In terms of biological role, bidirectionally degrades single-stranded DNA into large acid-insoluble oligonucleotides, which are then degraded further into small acid-soluble oligonucleotides. The chain is Exodeoxyribonuclease 7 large subunit from Lactobacillus gasseri (strain ATCC 33323 / DSM 20243 / BCRC 14619 / CIP 102991 / JCM 1131 / KCTC 3163 / NCIMB 11718 / NCTC 13722 / AM63).